Consider the following 666-residue polypeptide: Probable potassium transport system protein Kup (666 aa).

12 helical membrane-spanning segments follow: residues Gly-16–Met-36, Ile-58–Leu-78, Thr-99–Leu-119, Ile-141–Ala-161, Thr-167–Ile-187, Ile-221–Leu-241, Trp-253–Ala-273, Phe-292–Ile-312, Thr-343–Phe-363, Tyr-373–Ile-393, Val-402–Val-422, and Phe-424–Ile-444.

This sequence belongs to the HAK/KUP transporter (TC 2.A.72) family.

The protein localises to the cell membrane. The catalysed reaction is K(+)(in) + H(+)(in) = K(+)(out) + H(+)(out). Transport of potassium into the cell. Likely operates as a K(+):H(+) symporter. The protein is Probable potassium transport system protein Kup of Streptococcus agalactiae serotype V (strain ATCC BAA-611 / 2603 V/R).